The sequence spans 134 residues: Small ribosomal subunit protein uS11 (134 aa).

It belongs to the universal ribosomal protein uS11 family. In terms of assembly, part of the 30S ribosomal subunit. Interacts with proteins S7 and S18. Binds to IF-3.

Its function is as follows. Located on the platform of the 30S subunit, it bridges several disparate RNA helices of the 16S rRNA. Forms part of the Shine-Dalgarno cleft in the 70S ribosome. The protein is Small ribosomal subunit protein uS11 of Paracidovorax citrulli (strain AAC00-1) (Acidovorax citrulli).